The sequence spans 91 residues: Putative septation protein SpoVG (91 aa).

The protein belongs to the SpoVG family.

Functionally, could be involved in septation. This Clostridium beijerinckii (strain ATCC 51743 / NCIMB 8052) (Clostridium acetobutylicum) protein is Putative septation protein SpoVG.